An 81-amino-acid chain; its full sequence is Trefoil factor 3 (81 aa).

The first 22 residues, 1–22 (METRAFWTTLLLVLVAGSSCKA), serve as a signal peptide directing secretion. One can recognise a P-type domain in the interval 31–74 (SQCMVPANVRVDCGYPTVTSEQCNNRGCCFDSSIPNVPWCFKPL). 3 cysteine pairs are disulfide-bonded: C33–C59, C43–C58, and C53–C70.

In terms of assembly, monomer. Homodimer; disulfide-linked. Expressed in goblet cells of the intestines, and colon, in paraventricular hypothalamus and supraoptic nuclei. Weakly expressed in gastric epithelial cells (at protein level). Expressed by goblet cells of small and large intestinal epithelia, kidney and stomach. Expressed in the paraventricular hypothalamus, arcuate nucleus and amygdala of the brain. Weakly expressed in gastric epithelial cells.

It localises to the secreted. The protein localises to the extracellular space. Its subcellular location is the extracellular matrix. It is found in the cytoplasm. In terms of biological role, involved in the maintenance and repair of the intestinal mucosa. Promotes the mobility of epithelial cells in healing processes (motogen). The sequence is that of Trefoil factor 3 (Tff3) from Rattus norvegicus (Rat).